The chain runs to 296 residues: Tyrosine recombinase XerC (296 aa).

Positions 2–85 (ADQASWLERF…ALKQFGQFLL (84 aa)) constitute a Core-binding (CB) domain. Residues 106 to 285 (TLPKNLDPDS…DFQHLAKVYD (180 aa)) enclose the Tyr recombinase domain. Active-site residues include Arg145, Lys169, His237, Arg240, and His263. Catalysis depends on Tyr272, which acts as the O-(3'-phospho-DNA)-tyrosine intermediate.

It belongs to the 'phage' integrase family. XerC subfamily. Forms a cyclic heterotetrameric complex composed of two molecules of XerC and two molecules of XerD.

It is found in the cytoplasm. Site-specific tyrosine recombinase, which acts by catalyzing the cutting and rejoining of the recombining DNA molecules. The XerC-XerD complex is essential to convert dimers of the bacterial chromosome into monomers to permit their segregation at cell division. It also contributes to the segregational stability of plasmids. The polypeptide is Tyrosine recombinase XerC (Shewanella amazonensis (strain ATCC BAA-1098 / SB2B)).